The primary structure comprises 942 residues: Valine--tRNA ligase (942 aa).

The 'HIGH' region motif lies at 43 to 53; it reads PNVTGTLHMGH. Residues 551–555 carry the 'KMSKS' region motif; the sequence is KMSKS. K554 is an ATP binding site. Residues 876 to 942 are a coiled coil; it reads EGLVDLDAER…AGLREQRAKL (67 aa).

This sequence belongs to the class-I aminoacyl-tRNA synthetase family. ValS type 1 subfamily. In terms of assembly, monomer.

It is found in the cytoplasm. The catalysed reaction is tRNA(Val) + L-valine + ATP = L-valyl-tRNA(Val) + AMP + diphosphate. Catalyzes the attachment of valine to tRNA(Val). As ValRS can inadvertently accommodate and process structurally similar amino acids such as threonine, to avoid such errors, it has a 'posttransfer' editing activity that hydrolyzes mischarged Thr-tRNA(Val) in a tRNA-dependent manner. The polypeptide is Valine--tRNA ligase (Stenotrophomonas maltophilia (strain R551-3)).